The following is a 441-amino-acid chain: Mitochondrial distribution and morphology protein 12 (441 aa).

The SMP-LTD domain maps to Met1–Val441. Disordered stretches follow at residues Asp68–Glu89 and Arg183–Glu289. 2 stretches are compositionally biased toward polar residues: residues Ser226–Thr245 and Pro253–Gly263.

Belongs to the MDM12 family. In terms of assembly, component of the ER-mitochondria encounter structure (ERMES) or MDM complex, composed of MMM1, MDM10, MDM12 and MDM34. An MMM1 homodimer associates with one molecule of MDM12 on each side in a pairwise head-to-tail manner, and the SMP-LTD domains of MMM1 and MDM12 generate a continuous hydrophobic tunnel for phospholipid trafficking.

The protein resides in the mitochondrion outer membrane. The protein localises to the endoplasmic reticulum membrane. Its function is as follows. Component of the ERMES/MDM complex, which serves as a molecular tether to connect the endoplasmic reticulum (ER) and mitochondria. Components of this complex are involved in the control of mitochondrial shape and protein biogenesis, and function in nonvesicular lipid trafficking between the ER and mitochondria. MDM12 is required for the interaction of the ER-resident membrane protein MMM1 and the outer mitochondrial membrane-resident beta-barrel protein MDM10. The MDM12-MMM1 subcomplex functions in the major beta-barrel assembly pathway that is responsible for biogenesis of all mitochondrial outer membrane beta-barrel proteins, and acts in a late step after the SAM complex. The MDM10-MDM12-MMM1 subcomplex further acts in the TOM40-specific pathway after the action of the MDM12-MMM1 complex. Essential for establishing and maintaining the structure of mitochondria and maintenance of mtDNA nucleoids. The polypeptide is Mitochondrial distribution and morphology protein 12 (Paracoccidioides lutzii (strain ATCC MYA-826 / Pb01) (Paracoccidioides brasiliensis)).